The sequence spans 903 residues: DNA mismatch repair protein MutS (903 aa).

Residue 655–662 (GPNMAGKS) coordinates ATP.

Belongs to the DNA mismatch repair MutS family.

Its function is as follows. This protein is involved in the repair of mismatches in DNA. It is possible that it carries out the mismatch recognition step. This protein has a weak ATPase activity. The protein is DNA mismatch repair protein MutS of Caulobacter vibrioides (strain ATCC 19089 / CIP 103742 / CB 15) (Caulobacter crescentus).